Reading from the N-terminus, the 510-residue chain is Protein PLASTID TRANSCRIPTIONALLY ACTIVE 16, chloroplastic (510 aa).

A compositionally biased stretch (polar residues) spans 1–14 (MASSSTSFPLTTAP). The N-terminal 19 residues, 1–19 (MASSSTSFPLTTAPPQGVR), are a transit peptide targeting the chloroplast. 2 disordered regions span residues 1–24 (MASS…NRRK) and 38–58 (LGKT…NPFQ). A compositionally biased stretch (basic and acidic residues) spans 41–51 (TKGDDDSEGKQ). Residue 94 to 123 (IFVAGATGQAGIRIAQTLLQRGFSVRAGVP) participates in NADP(+) binding. Positions 354-403 (ARERAEEEAKVAADKAREAAEAAKEFEKQMQKLSEKEAEAASLAEDAQQK) form a coiled coil. Ser395 carries the post-translational modification Phosphoserine. Thr451 is subject to Phosphothreonine; by STN7. A disordered region spans residues 453–493 (RGQAKARNLPPKKAVVKQRPSSPFASKPKEERPKKPEKEVR). Basic and acidic residues predominate over residues 479 to 493 (KPKEERPKKPEKEVR).

Belongs to the NAD(P)-dependent epimerase/dehydratase family. Component of the plastid transcriptionally active chromosome required for plastid gene expression. Interacts with DEGP1 under high light conditions and maybe its degradation target. Post-translationally, excluded from chloroplast nucleoid when phosphorylated on Thr-451 by STN7 that may regulate membrane-anchoring functions of the nucleoid.

Its subcellular location is the plastid. The protein localises to the chloroplast stroma. It localises to the chloroplast nucleoid. The protein resides in the chloroplast thylakoid membrane. In terms of biological role, probably involved in the regulation of plastid gene expression. In Arabidopsis thaliana (Mouse-ear cress), this protein is Protein PLASTID TRANSCRIPTIONALLY ACTIVE 16, chloroplastic.